The following is a 145-amino-acid chain: Large ribosomal subunit protein bL17 (145 aa).

This sequence belongs to the bacterial ribosomal protein bL17 family. Part of the 50S ribosomal subunit. Contacts protein L32.

This is Large ribosomal subunit protein bL17 from Orientia tsutsugamushi (strain Ikeda) (Rickettsia tsutsugamushi).